A 28-amino-acid chain; its full sequence is U15-ctenitoxin-Co1a (28 aa).

2 cysteine pairs are disulfide-bonded: C3/C17 and C10/C22.

As to expression, expressed by the venom gland.

The protein localises to the secreted. Insecticidal neurotoxin that reversibly inhibits the N-methyl-D-aspartate (NMDA)-subtype of ionotropic glutamate receptor (GRIN) and inhibits inactivation of insect sodium channels (Nav). In vivo, is highly toxic to insects. The polypeptide is U15-ctenitoxin-Co1a (Ctenus ornatus (Brazilian spider)).